Here is a 73-residue protein sequence, read N- to C-terminus: Translation initiation factor IF-1 (73 aa).

Positions 1–73 (MGKKEEAFEV…TKGRIVYRER (73 aa)) constitute an S1-like domain.

Belongs to the IF-1 family. Component of the 30S ribosomal translation pre-initiation complex which assembles on the 30S ribosome in the order IF-2 and IF-3, IF-1 and N-formylmethionyl-tRNA(fMet); mRNA recruitment can occur at any time during PIC assembly.

It localises to the cytoplasm. In terms of biological role, one of the essential components for the initiation of protein synthesis. Stabilizes the binding of IF-2 and IF-3 on the 30S subunit to which N-formylmethionyl-tRNA(fMet) subsequently binds. Helps modulate mRNA selection, yielding the 30S pre-initiation complex (PIC). Upon addition of the 50S ribosomal subunit IF-1, IF-2 and IF-3 are released leaving the mature 70S translation initiation complex. The sequence is that of Translation initiation factor IF-1 from Rhodopirellula baltica (strain DSM 10527 / NCIMB 13988 / SH1).